The following is a 179-amino-acid chain: Signal peptidase complex catalytic subunit SEC11A (179 aa).

The Cytoplasmic segment spans residues 1–16; it reads MLSLDFLDDVRRMNKR. Residues 17-36 form a helical; Signal-anchor for type II membrane protein membrane-spanning segment; sequence QLYYQVLNFGMIVSSALMIW. Residues 37–179 lie on the Lumenal side of the membrane; that stretch reads KGLMVITGSE…LGLFVLVHRE (143 aa). Residues serine 56, histidine 96, and aspartate 122 each act as charge relay system in the active site. Residues 165–176 form a C-terminal short (CTS) helix region; it reads AVLFLLGLFVLV.

It belongs to the peptidase S26B family. Component of the signal peptidase complex paralog A (SPC-A) composed of a catalytic subunit SEC11A and three accessory subunits SPCS1, SPCS2 and SPCS3. Within the complex, interacts with SPCS2 and SPCS3. The complex induces a local thinning of the ER membrane which is used to measure the length of the signal peptide (SP) h-region of protein substrates. This ensures the selectivity of the complex towards h-regions shorter than 18-20 amino acids.

The protein resides in the endoplasmic reticulum membrane. The enzyme catalyses Cleavage of hydrophobic, N-terminal signal or leader sequences from secreted and periplasmic proteins.. Catalytic component of the signal peptidase complex (SPC) which catalyzes the cleavage of N-terminal signal sequences from nascent proteins as they are translocated into the lumen of the endoplasmic reticulum. Specifically cleaves N-terminal signal peptides that contain a hydrophobic alpha-helix (h-region) shorter than 18-20 amino acids. This Bos taurus (Bovine) protein is Signal peptidase complex catalytic subunit SEC11A (SEC11A).